We begin with the raw amino-acid sequence, 282 residues long: MAPAAYSDLSKASNDLINKDFYHLSTAAVDVKTVAPNGVTFTVKGKTTKDDTISASVDAKYLDKATGLTLTQGWNNANALNTKIELSELLTPGLKGELDTSVVPNGARNAKLNFFYQQSAVNARLFFDLLKGPIATADLVVAHDGFTAGAELGYDISSAKVNKYSVGVGYANLNYGLAATATSNLSVFSAAYFHKVSPLVQVGAKATWDSIKSSNVNVEFATKYALDNTSFIKAKIADSGLTALSYTQELRPGVKLGLGASFDALKLAEPVHKLGFSLSFAA.

Belongs to the eukaryotic mitochondrial porin family.

Its subcellular location is the mitochondrion outer membrane. Functionally, forms a channel through the cell membrane that allows diffusion of small hydrophilic molecules. The channel adopts an open conformation at low or zero membrane potential and a closed conformation at potentials above 30-40 mV. The open state has a weak anion selectivity whereas the closed state is cation-selective. In Candida albicans (strain SC5314 / ATCC MYA-2876) (Yeast), this protein is Mitochondrial outer membrane protein porin (POR1).